We begin with the raw amino-acid sequence, 218 residues long: Guanylate kinase (218 aa).

The region spanning 14 to 193 is the Guanylate kinase-like domain; that stretch reads GLMLVLSSPS…AFAEVRGIVV (180 aa). 21–28 lines the ATP pocket; that stretch reads SPSGAGKS.

Belongs to the guanylate kinase family.

The protein resides in the cytoplasm. It carries out the reaction GMP + ATP = GDP + ADP. Its function is as follows. Essential for recycling GMP and indirectly, cGMP. This chain is Guanylate kinase (gmk), found in Mesorhizobium japonicum (strain LMG 29417 / CECT 9101 / MAFF 303099) (Mesorhizobium loti (strain MAFF 303099)).